The primary structure comprises 347 residues: Ketol-acid reductoisomerase (NADP(+)) (347 aa).

Residues threonine 3 to threonine 182 enclose the KARI N-terminal Rossmann domain. NADP(+)-binding positions include tyrosine 26–glutamine 29, arginine 49, serine 53, and aspartate 83–glutamine 86. The active site involves histidine 108. Glycine 134 provides a ligand contact to NADP(+). A KARI C-terminal knotted domain is found at threonine 183–isoleucine 328. Mg(2+) contacts are provided by aspartate 191, glutamate 195, glutamate 227, and glutamate 231. Serine 252 contacts substrate.

The protein belongs to the ketol-acid reductoisomerase family. It depends on Mg(2+) as a cofactor.

The catalysed reaction is (2R)-2,3-dihydroxy-3-methylbutanoate + NADP(+) = (2S)-2-acetolactate + NADPH + H(+). It catalyses the reaction (2R,3R)-2,3-dihydroxy-3-methylpentanoate + NADP(+) = (S)-2-ethyl-2-hydroxy-3-oxobutanoate + NADPH + H(+). Its pathway is amino-acid biosynthesis; L-isoleucine biosynthesis; L-isoleucine from 2-oxobutanoate: step 2/4. The protein operates within amino-acid biosynthesis; L-valine biosynthesis; L-valine from pyruvate: step 2/4. Its function is as follows. Involved in the biosynthesis of branched-chain amino acids (BCAA). Catalyzes an alkyl-migration followed by a ketol-acid reduction of (S)-2-acetolactate (S2AL) to yield (R)-2,3-dihydroxy-isovalerate. In the isomerase reaction, S2AL is rearranged via a Mg-dependent methyl migration to produce 3-hydroxy-3-methyl-2-ketobutyrate (HMKB). In the reductase reaction, this 2-ketoacid undergoes a metal-dependent reduction by NADPH to yield (R)-2,3-dihydroxy-isovalerate. This Leuconostoc mesenteroides subsp. cremoris protein is Ketol-acid reductoisomerase (NADP(+)).